Consider the following 179-residue polypeptide: Large ribosomal subunit protein uL5 (179 aa).

This sequence belongs to the universal ribosomal protein uL5 family. In terms of assembly, part of the 50S ribosomal subunit; part of the 5S rRNA/L5/L18/L25 subcomplex. Contacts the 5S rRNA and the P site tRNA. Forms a bridge to the 30S subunit in the 70S ribosome.

Functionally, this is one of the proteins that bind and probably mediate the attachment of the 5S RNA into the large ribosomal subunit, where it forms part of the central protuberance. In the 70S ribosome it contacts protein S13 of the 30S subunit (bridge B1b), connecting the 2 subunits; this bridge is implicated in subunit movement. Contacts the P site tRNA; the 5S rRNA and some of its associated proteins might help stabilize positioning of ribosome-bound tRNAs. The polypeptide is Large ribosomal subunit protein uL5 (Aliivibrio salmonicida (strain LFI1238) (Vibrio salmonicida (strain LFI1238))).